Consider the following 420-residue polypeptide: Putative T-box protein 33 (420 aa).

A DNA-binding region (T-box) is located at residues 93 to 291 (LWKELHYLSN…ANPTSRGDAK (199 aa)). The span at 395 to 412 (SPPLQPTATSPEASQNQI) shows a compositional bias: polar residues. The interval 395–420 (SPPLQPTATSPEASQNQIKLEMNQYM) is disordered.

The protein localises to the nucleus. This chain is Putative T-box protein 33 (tbx-33), found in Caenorhabditis elegans.